A 207-amino-acid chain; its full sequence is Histidine biosynthesis bifunctional protein HisIE (207 aa).

The tract at residues 1-117 (MSLVTTINWE…GKQEQPALVF (117 aa)) is phosphoribosyl-AMP cyclohydrolase. The segment at 118-207 (LHQLEQVLAN…TEKLQERHNK (90 aa)) is phosphoribosyl-ATP pyrophosphohydrolase.

This sequence in the N-terminal section; belongs to the PRA-CH family. In the C-terminal section; belongs to the PRA-PH family.

It is found in the cytoplasm. It catalyses the reaction 1-(5-phospho-beta-D-ribosyl)-ATP + H2O = 1-(5-phospho-beta-D-ribosyl)-5'-AMP + diphosphate + H(+). The enzyme catalyses 1-(5-phospho-beta-D-ribosyl)-5'-AMP + H2O = 1-(5-phospho-beta-D-ribosyl)-5-[(5-phospho-beta-D-ribosylamino)methylideneamino]imidazole-4-carboxamide. The protein operates within amino-acid biosynthesis; L-histidine biosynthesis; L-histidine from 5-phospho-alpha-D-ribose 1-diphosphate: step 2/9. Its pathway is amino-acid biosynthesis; L-histidine biosynthesis; L-histidine from 5-phospho-alpha-D-ribose 1-diphosphate: step 3/9. In Photobacterium profundum (strain SS9), this protein is Histidine biosynthesis bifunctional protein HisIE.